A 597-amino-acid chain; its full sequence is FERM domain-containing protein 3 (597 aa).

One can recognise an FERM domain in the interval 32–312 (MRCTIRLLDD…ENQAFYKYAK (281 aa)). The tract at residues 409 to 435 (SAPLISSSPVKAAQEYEDPPSEEEDKI) is disordered. The segment covering 423–432 (EYEDPPSEEE) has biased composition (acidic residues). Residues 531 to 551 (LLVVGLGLLLFVFPLLLLLLE) form a helical membrane-spanning segment.

The protein localises to the membrane. In terms of biological role, putative tumor suppressor gene that may be implicated in the origin and progression of lung cancer. This is FERM domain-containing protein 3 (FRMD3) from Pongo abelii (Sumatran orangutan).